Here is a 468-residue protein sequence, read N- to C-terminus: ATP synthase subunit beta (468 aa).

148–155 (GGAGVGKT) provides a ligand contact to ATP.

This sequence belongs to the ATPase alpha/beta chains family. In terms of assembly, F-type ATPases have 2 components, CF(1) - the catalytic core - and CF(0) - the membrane proton channel. CF(1) has five subunits: alpha(3), beta(3), gamma(1), delta(1), epsilon(1). CF(0) has three main subunits: a(1), b(2) and c(9-12). The alpha and beta chains form an alternating ring which encloses part of the gamma chain. CF(1) is attached to CF(0) by a central stalk formed by the gamma and epsilon chains, while a peripheral stalk is formed by the delta and b chains.

Its subcellular location is the cell inner membrane. The enzyme catalyses ATP + H2O + 4 H(+)(in) = ADP + phosphate + 5 H(+)(out). Produces ATP from ADP in the presence of a proton gradient across the membrane. The catalytic sites are hosted primarily by the beta subunits. The chain is ATP synthase subunit beta from Xanthomonas oryzae pv. oryzae (strain KACC10331 / KXO85).